Here is a 124-residue protein sequence, read N- to C-terminus: Small ribosomal subunit protein uS12 (124 aa).

At aspartate 89 the chain carries 3-methylthioaspartic acid. Residues 103–124 form a disordered region; that stretch reads DTAGVKDRRQSRSKYGAKSPKE.

It belongs to the universal ribosomal protein uS12 family. Part of the 30S ribosomal subunit. Contacts proteins S8 and S17. May interact with IF1 in the 30S initiation complex.

With S4 and S5 plays an important role in translational accuracy. Its function is as follows. Interacts with and stabilizes bases of the 16S rRNA that are involved in tRNA selection in the A site and with the mRNA backbone. Located at the interface of the 30S and 50S subunits, it traverses the body of the 30S subunit contacting proteins on the other side and probably holding the rRNA structure together. The combined cluster of proteins S8, S12 and S17 appears to hold together the shoulder and platform of the 30S subunit. This Prochlorococcus marinus (strain NATL1A) protein is Small ribosomal subunit protein uS12.